Here is a 131-residue protein sequence, read N- to C-terminus: Fatty acid-binding protein (131 aa).

Residues Arg-106 and 126–128 (RPY) each bind (5Z,8Z,11Z,14Z)-eicosatetraenoate. (9Z)-octadecenoate-binding positions include Arg-106 and 126–128 (RPY).

This sequence belongs to the calycin superfamily. Fatty-acid binding protein (FABP) family.

The protein resides in the cytoplasm. Functionally, FABPs are thought to play a role in the intracellular transport of long-chain fatty acids and their acyl-CoA esters. This Lepidoglyphus destructor (Storage mite) protein is Fatty acid-binding protein.